Reading from the N-terminus, the 298-residue chain is Beta-soluble NSF attachment protein (298 aa).

It belongs to the SNAP family. Interacts with PRKCABP, and disrupts the interaction between GRIA2 and PRKCABP, leading to the internalization of GRIA2. Brain.

Its subcellular location is the membrane. Required for vesicular transport between the endoplasmic reticulum and the Golgi apparatus. This chain is Beta-soluble NSF attachment protein (NAPB), found in Bos taurus (Bovine).